The primary structure comprises 116 residues: MVSKQPRKQRKARFNAPLHMRQRFMHAMLSPELRKEYKKRSAQVKKGDTVKVMRGDNAGVEGEVLSVDLKRCVITVAGVSNFRADGTEVPRPIHPSNVMITKLDLDDDEREKIFSR.

This sequence belongs to the universal ribosomal protein uL24 family. Part of the 50S ribosomal subunit.

Functionally, one of two assembly initiator proteins, it binds directly to the 5'-end of the 23S rRNA, where it nucleates assembly of the 50S subunit. Located at the polypeptide exit tunnel on the outside of the subunit. The polypeptide is Large ribosomal subunit protein uL24 (Methanothrix thermoacetophila (strain DSM 6194 / JCM 14653 / NBRC 101360 / PT) (Methanosaeta thermophila)).